The primary structure comprises 150 residues: MVYWIIIMSTFVLDQLTKARAEKFFVDSPVNLLGGILSLTYVQNRGGAFSILEGKRRFFIIVSIILILFLCYMIFKSTSNLYKFSFSLIVGGAIGNLFDRIVKGYVVDFIDIKVIPVFNLADFFITGGVLLLTFLILKEGGEELFLKKKP.

The next 2 helical transmembrane spans lie at 58–78 and 85–107; these read FFII…FKST and SFSL…GYVV. Catalysis depends on residues Asp108 and Asp122. The helical transmembrane segment at 117-137 threads the bilayer; the sequence is VFNLADFFITGGVLLLTFLIL.

This sequence belongs to the peptidase A8 family.

The protein localises to the cell membrane. The enzyme catalyses Release of signal peptides from bacterial membrane prolipoproteins. Hydrolyzes -Xaa-Yaa-Zaa-|-(S,diacylglyceryl)Cys-, in which Xaa is hydrophobic (preferably Leu), and Yaa (Ala or Ser) and Zaa (Gly or Ala) have small, neutral side chains.. It functions in the pathway protein modification; lipoprotein biosynthesis (signal peptide cleavage). Functionally, this protein specifically catalyzes the removal of signal peptides from prolipoproteins. The sequence is that of Lipoprotein signal peptidase from Caldicellulosiruptor bescii (strain ATCC BAA-1888 / DSM 6725 / KCTC 15123 / Z-1320) (Anaerocellum thermophilum).